A 294-amino-acid chain; its full sequence is 4-hydroxy-tetrahydrodipicolinate synthase (294 aa).

A pyruvate-binding site is contributed by Thr45. The Proton donor/acceptor role is filled by Tyr133. The Schiff-base intermediate with substrate role is filled by Lys161. Ile203 contacts pyruvate.

Belongs to the DapA family. Homotetramer; dimer of dimers.

Its subcellular location is the cytoplasm. The enzyme catalyses L-aspartate 4-semialdehyde + pyruvate = (2S,4S)-4-hydroxy-2,3,4,5-tetrahydrodipicolinate + H2O + H(+). The protein operates within amino-acid biosynthesis; L-lysine biosynthesis via DAP pathway; (S)-tetrahydrodipicolinate from L-aspartate: step 3/4. Functionally, catalyzes the condensation of (S)-aspartate-beta-semialdehyde [(S)-ASA] and pyruvate to 4-hydroxy-tetrahydrodipicolinate (HTPA). The sequence is that of 4-hydroxy-tetrahydrodipicolinate synthase from Shewanella sp. (strain MR-7).